We begin with the raw amino-acid sequence, 347 residues long: Phosphoribosylformylglycinamidine cyclo-ligase (347 aa).

This sequence belongs to the AIR synthase family.

Its subcellular location is the cytoplasm. The enzyme catalyses 2-formamido-N(1)-(5-O-phospho-beta-D-ribosyl)acetamidine + ATP = 5-amino-1-(5-phospho-beta-D-ribosyl)imidazole + ADP + phosphate + H(+). It participates in purine metabolism; IMP biosynthesis via de novo pathway; 5-amino-1-(5-phospho-D-ribosyl)imidazole from N(2)-formyl-N(1)-(5-phospho-D-ribosyl)glycinamide: step 2/2. This Desulfatibacillum aliphaticivorans protein is Phosphoribosylformylglycinamidine cyclo-ligase.